Reading from the N-terminus, the 982-residue chain is MFQIRNYATKYAQSRALRKYPVGGVFHGYEVKRLLPVPELKLTAVDLLHNQTGSQHLHIDRDDNNNVFSIGFKTNPPDSTGVPHILEHTTLCGSHKYPVRDPFFKMLNRSLANFMNAMTGHDYTFYPFATTNETDFANLRDVYLDATLNPLLNQQDFLQEGWRLEHTKVDDPNSDIGFKGVVYNEMKGQVSNANYYFWIKFQESYYPSLNNSGGDPTKMTDLQYEDLISFHRNNYHPSNAKTFTYGNFDLNNTLQRLNKEYQGYGRRGSKKRELLPIQMKEDVSVETEGQVDPMLPPDKQIKTSVTWICGKPEDTYQTFLLKILGNLLLDGHSSPFYQKLIESGLAYDFSVNTGVESQTAANFITIGVQGCDEVDSIYEVINKVWEEVLQNPFEESRIQAIIQQLELSKKDQRADFGLQLLYSVLPGWVNKTDPFDSLLFDETLERFQEDWATKGDNLFKDLIKEFVISKPVFKFTMKGSETFSQKLDAEEQERLERKLKLLDEEDKKVIFERGKQLQELQDLKEDLSCLPSLQISAIPRVSKTYPLLEKDNVLNRITDTNGITYVRGKRLLNHHIPRELYPFLPLYADSLTNLGTSTEEFSTIEEQIKLHTGGVSTRVSVNPDAQTGKPMLLFQVDGWALNSKTDHIFKFWKKLLCETDFHKHKEKLKVLIRSLASSNTASVAETGHAFARNFGAAHLSVTKAINESLNGIEQLQLINKLSQCLDDEALFEKEVVSKLVELQSYINGSSDMKFMITSDSQVQIDAVHQQITGFLSSLPKDSKPCDFYSENYSMLENPGKPTLLQFPFQVHYTAKCYPGVSYTHPDGAKLQILSNMLTHKYLHREIREKGGAYGGGATYSALDGTFSFYSYRDPHALNSLSTFDSVPEFILNKSSWGEPDLNEAKLSVFQQVDSPMSAKNEGTILFHYDVTDEMKQRRREQLLDVNLNDIHQVAEEYLKQDKSIASIVGPEIPNFDALVQTV.

A mitochondrion-targeting transit peptide spans 1–7 (MFQIRNY). H84 is a Zn(2+) binding site. E87 (proton acceptor) is an active-site residue. H88 contacts Zn(2+). E160 is an active-site residue. Position 185 (E185) interacts with Zn(2+).

This sequence belongs to the peptidase M16 family. PreP subfamily. As to quaternary structure, monomer and homodimer; homodimerization is induced by binding of the substrate. Zn(2+) is required as a cofactor.

The protein resides in the mitochondrion intermembrane space. The protein localises to the mitochondrion matrix. Its function is as follows. Degrades mitochondrial transit peptides after their cleavage in the intermembrane space or in the matrix, and presequence peptides; clearance of these peptides is required to keep the presequence processing machinery running. Preferentially cleaves the N-terminal side of paired basic amino acid residues. Also degrades other unstructured peptides. May function as an ATP-dependent peptidase as opposed to a metalloendopeptidase. The sequence is that of Presequence protease, mitochondrial (CYM1) from Kluyveromyces lactis (strain ATCC 8585 / CBS 2359 / DSM 70799 / NBRC 1267 / NRRL Y-1140 / WM37) (Yeast).